The chain runs to 731 residues: Polyribonucleotide nucleotidyltransferase (731 aa).

2 residues coordinate Mg(2+): Asp-488 and Asp-494. In terms of domain architecture, KH spans Pro-555–Ile-614. Residues Gly-624–Lys-692 form the S1 motif domain. A disordered region spans residues Ala-693 to Glu-731. Residues Val-694–Asn-722 are compositionally biased toward basic and acidic residues.

It belongs to the polyribonucleotide nucleotidyltransferase family. The cofactor is Mg(2+).

The protein resides in the cytoplasm. The catalysed reaction is RNA(n+1) + phosphate = RNA(n) + a ribonucleoside 5'-diphosphate. Involved in mRNA degradation. Catalyzes the phosphorolysis of single-stranded polyribonucleotides processively in the 3'- to 5'-direction. The sequence is that of Polyribonucleotide nucleotidyltransferase from Bartonella tribocorum (strain CIP 105476 / IBS 506).